Reading from the N-terminus, the 510-residue chain is Inositol-3-phosphate synthase (510 aa).

NAD(+)-binding residues include Gly70, Gly71, Asn72, Asn73, Asp143, Ile180, Gln190, Arg193, Thr230, Ala231, Asn232, Thr233, Gly281, Ser282, Asp306, Ser309, Asn340, Asn341, Asp342, Lys355, Gly393, Asp394, Asp422, and Ser423.

Belongs to the myo-inositol 1-phosphate synthase family. It depends on NAD(+) as a cofactor.

The protein resides in the cytoplasm. The protein localises to the cytosol. It is found in the nucleus. The enzyme catalyses D-glucose 6-phosphate = 1D-myo-inositol 3-phosphate. It functions in the pathway polyol metabolism; myo-inositol biosynthesis; myo-inositol from D-glucose 6-phosphate: step 1/2. Its function is as follows. Key enzyme in myo-inositol biosynthesis pathway that catalyzes the conversion of glucose 6-phosphate to 1-myo-inositol 1-phosphate in a NAD-dependent manner. This is Inositol-3-phosphate synthase from Sesamum indicum (Oriental sesame).